The primary structure comprises 824 residues: Leucine--tRNA ligase (824 aa).

The 'HIGH' region signature appears at Pro42–His52. Residues Lys581 to Ser585 carry the 'KMSKS' region motif. An ATP-binding site is contributed by Lys584.

It belongs to the class-I aminoacyl-tRNA synthetase family.

Its subcellular location is the cytoplasm. The catalysed reaction is tRNA(Leu) + L-leucine + ATP = L-leucyl-tRNA(Leu) + AMP + diphosphate. This Syntrophomonas wolfei subsp. wolfei (strain DSM 2245B / Goettingen) protein is Leucine--tRNA ligase.